A 322-amino-acid chain; its full sequence is Cytochrome c biogenesis protein CcsA (322 aa).

A run of 7 helical transmembrane segments spans residues 9–29 (IFTH…LITL), 44–64 (GMIV…IYSG), 71–91 (LYES…VPYF), 143–163 (MILS…LLVI), 226–246 (VISL…VWAN), 255–275 (WDPK…YLHI), and 287–307 (AIVA…VNLL).

This sequence belongs to the CcmF/CycK/Ccl1/NrfE/CcsA family. In terms of assembly, may interact with Ccs1.

The protein resides in the plastid. Its subcellular location is the chloroplast thylakoid membrane. Its function is as follows. Required during biogenesis of c-type cytochromes (cytochrome c6 and cytochrome f) at the step of heme attachment. The chain is Cytochrome c biogenesis protein CcsA from Lactuca sativa (Garden lettuce).